Here is a 107-residue protein sequence, read N- to C-terminus: Large ribosomal subunit protein uL24 (107 aa).

The protein belongs to the universal ribosomal protein uL24 family. As to quaternary structure, part of the 50S ribosomal subunit.

Its function is as follows. One of two assembly initiator proteins, it binds directly to the 5'-end of the 23S rRNA, where it nucleates assembly of the 50S subunit. Functionally, one of the proteins that surrounds the polypeptide exit tunnel on the outside of the subunit. This chain is Large ribosomal subunit protein uL24, found in Thiobacillus denitrificans (strain ATCC 25259 / T1).